The primary structure comprises 264 residues: Low molecular mass lipoprotein PBMHP-12 (264 aa).

The signal sequence occupies residues 1 to 16 (MKLLVVFAMCVPAASA).

Belongs to the 30 kDa lipoprotein family.

The protein resides in the secreted. The polypeptide is Low molecular mass lipoprotein PBMHP-12 (Bombyx mori (Silk moth)).